Consider the following 428-residue polypeptide: Aerobic C4-dicarboxylate transport protein (428 aa).

8 helical membrane-spanning segments follow: residues 5–27 (LFKS…GHFY), 47–64 (MIIA…IAGM), 77–99 (ALLY…VNVV), 141–163 (VIGA…FGFA), 184–206 (VIFG…AMAF), 219–241 (LGQL…LGSI), 326–348 (IVHQ…GVTG), and 352–374 (IVLA…LILG).

The protein belongs to the dicarboxylate/amino acid:cation symporter (DAACS) (TC 2.A.23) family.

The protein localises to the cell inner membrane. In terms of biological role, responsible for the aerobic transport of the dicarboxylates fumarate and malate and to a lesser extent succinate, from the periplasm across the inner membrane. This chain is Aerobic C4-dicarboxylate transport protein, found in Escherichia coli O157:H7.